The following is an 87-amino-acid chain: Large ribosomal subunit protein bL27 (87 aa).

The tract at residues 1–25 (MAHKKGASSSRNGRDSNAQRLGVKR) is disordered. Over residues 7–19 (ASSSRNGRDSNAQ) the composition is skewed to polar residues.

This sequence belongs to the bacterial ribosomal protein bL27 family.

The protein is Large ribosomal subunit protein bL27 of Rhodococcus opacus (strain B4).